Reading from the N-terminus, the 245-residue chain is 1-(5-phosphoribosyl)-5-[(5-phosphoribosylamino)methylideneamino] imidazole-4-carboxamide isomerase (245 aa).

The Proton acceptor role is filled by D8. The Proton donor role is filled by D130.

Belongs to the HisA/HisF family.

Its subcellular location is the cytoplasm. It catalyses the reaction 1-(5-phospho-beta-D-ribosyl)-5-[(5-phospho-beta-D-ribosylamino)methylideneamino]imidazole-4-carboxamide = 5-[(5-phospho-1-deoxy-D-ribulos-1-ylimino)methylamino]-1-(5-phospho-beta-D-ribosyl)imidazole-4-carboxamide. It participates in amino-acid biosynthesis; L-histidine biosynthesis; L-histidine from 5-phospho-alpha-D-ribose 1-diphosphate: step 4/9. The polypeptide is 1-(5-phosphoribosyl)-5-[(5-phosphoribosylamino)methylideneamino] imidazole-4-carboxamide isomerase (Pseudomonas putida (strain GB-1)).